The primary structure comprises 595 residues: Aspartate--tRNA(Asp/Asn) ligase (595 aa).

Glu174 serves as a coordination point for L-aspartate. An aspartate region spans residues 198 to 201 (QLFK). An L-aspartate-binding site is contributed by Arg220. ATP is bound by residues 220–222 (RDE) and Gln229. An L-aspartate-binding site is contributed by His452. An ATP-binding site is contributed by Glu486. Position 493 (Arg493) interacts with L-aspartate. 538–541 (GLDR) serves as a coordination point for ATP.

Belongs to the class-II aminoacyl-tRNA synthetase family. Type 1 subfamily. Homodimer.

Its subcellular location is the cytoplasm. The catalysed reaction is tRNA(Asx) + L-aspartate + ATP = L-aspartyl-tRNA(Asx) + AMP + diphosphate. In terms of biological role, aspartyl-tRNA synthetase with relaxed tRNA specificity since it is able to aspartylate not only its cognate tRNA(Asp) but also tRNA(Asn). Reaction proceeds in two steps: L-aspartate is first activated by ATP to form Asp-AMP and then transferred to the acceptor end of tRNA(Asp/Asn). This is Aspartate--tRNA(Asp/Asn) ligase from Nitrosococcus oceani (strain ATCC 19707 / BCRC 17464 / JCM 30415 / NCIMB 11848 / C-107).